A 389-amino-acid polypeptide reads, in one-letter code: Lipid-A-disaccharide synthase (389 aa).

Belongs to the LpxB family.

It catalyses the reaction a lipid X + a UDP-2-N,3-O-bis[(3R)-3-hydroxyacyl]-alpha-D-glucosamine = a lipid A disaccharide + UDP + H(+). It functions in the pathway bacterial outer membrane biogenesis; LPS lipid A biosynthesis. Its function is as follows. Condensation of UDP-2,3-diacylglucosamine and 2,3-diacylglucosamine-1-phosphate to form lipid A disaccharide, a precursor of lipid A, a phosphorylated glycolipid that anchors the lipopolysaccharide to the outer membrane of the cell. This Albidiferax ferrireducens (strain ATCC BAA-621 / DSM 15236 / T118) (Rhodoferax ferrireducens) protein is Lipid-A-disaccharide synthase.